A 214-amino-acid chain; its full sequence is Coiled-coil domain-containing protein 169 (214 aa).

Residues 30 to 144 (EMLQMSTFEL…IEQEAKAYYK (115 aa)) adopt a coiled-coil conformation. Residues 161 to 214 (VTQEAAKKQQSDPAHATREKPAFKAKYNGLAKRRTMTKRRGGMTKGSHPSNMKH) form a disordered region. Positions 165-182 (AAKKQQSDPAHATREKPA) are enriched in basic and acidic residues. The span at 191–202 (AKRRTMTKRRGG) shows a compositional bias: basic residues.

Belongs to the CCDC169 family.

The protein is Coiled-coil domain-containing protein 169 (ccdc169) of Xenopus laevis (African clawed frog).